Consider the following 630-residue polypeptide: 1-deoxy-D-xylulose-5-phosphate synthase (630 aa).

Thiamine diphosphate contacts are provided by residues histidine 72 and glycine 113–serine 115. Residue aspartate 144 coordinates Mg(2+). Thiamine diphosphate is bound by residues glycine 145–alanine 146, asparagine 173, tyrosine 284, and glutamate 367. Asparagine 173 contacts Mg(2+).

It belongs to the transketolase family. DXPS subfamily. In terms of assembly, homodimer. The cofactor is Mg(2+). Thiamine diphosphate serves as cofactor.

The enzyme catalyses D-glyceraldehyde 3-phosphate + pyruvate + H(+) = 1-deoxy-D-xylulose 5-phosphate + CO2. The protein operates within metabolic intermediate biosynthesis; 1-deoxy-D-xylulose 5-phosphate biosynthesis; 1-deoxy-D-xylulose 5-phosphate from D-glyceraldehyde 3-phosphate and pyruvate: step 1/1. In terms of biological role, catalyzes the acyloin condensation reaction between C atoms 2 and 3 of pyruvate and glyceraldehyde 3-phosphate to yield 1-deoxy-D-xylulose-5-phosphate (DXP). The protein is 1-deoxy-D-xylulose-5-phosphate synthase of Bacillus cereus (strain ATCC 10987 / NRS 248).